The following is a 282-amino-acid chain: 2-dehydro-3-deoxyphosphooctonate aldolase (282 aa).

The protein belongs to the KdsA family.

Its subcellular location is the cytoplasm. The enzyme catalyses D-arabinose 5-phosphate + phosphoenolpyruvate + H2O = 3-deoxy-alpha-D-manno-2-octulosonate-8-phosphate + phosphate. It participates in carbohydrate biosynthesis; 3-deoxy-D-manno-octulosonate biosynthesis; 3-deoxy-D-manno-octulosonate from D-ribulose 5-phosphate: step 2/3. It functions in the pathway bacterial outer membrane biogenesis; lipopolysaccharide biosynthesis. The polypeptide is 2-dehydro-3-deoxyphosphooctonate aldolase (Bradyrhizobium diazoefficiens (strain JCM 10833 / BCRC 13528 / IAM 13628 / NBRC 14792 / USDA 110)).